A 108-amino-acid polypeptide reads, in one-letter code: L-rhamnose mutarotase (108 aa).

Y19 lines the substrate pocket. H23 acts as the Proton donor in catalysis. Substrate-binding positions include Y45 and 80–81 (WW).

The protein belongs to the rhamnose mutarotase family. Homodimer.

It is found in the cytoplasm. The catalysed reaction is alpha-L-rhamnose = beta-L-rhamnose. It functions in the pathway carbohydrate metabolism; L-rhamnose metabolism. Functionally, involved in the anomeric conversion of L-rhamnose. The chain is L-rhamnose mutarotase from Ligilactobacillus salivarius (strain UCC118) (Lactobacillus salivarius).